Consider the following 184-residue polypeptide: Orotate phosphoribosyltransferase (184 aa).

Residues arginine 99, lysine 100, lysine 103, histidine 105, and 125–133 (EDTTTTGNS) contribute to the 5-phospho-alpha-D-ribose 1-diphosphate site. Threonine 129 and arginine 157 together coordinate orotate.

Belongs to the purine/pyrimidine phosphoribosyltransferase family. PyrE subfamily. As to quaternary structure, homodimer. The cofactor is Mg(2+).

It catalyses the reaction orotidine 5'-phosphate + diphosphate = orotate + 5-phospho-alpha-D-ribose 1-diphosphate. It functions in the pathway pyrimidine metabolism; UMP biosynthesis via de novo pathway; UMP from orotate: step 1/2. Its function is as follows. Catalyzes the transfer of a ribosyl phosphate group from 5-phosphoribose 1-diphosphate to orotate, leading to the formation of orotidine monophosphate (OMP). The polypeptide is Orotate phosphoribosyltransferase (Corynebacterium glutamicum (strain R)).